Consider the following 230-residue polypeptide: 3-beta-hydroxysteroid-Delta(8),Delta(7)-isomerase (230 aa).

Position 2 is an N-acetylthreonine (threonine 2). A run of 4 helical transmembrane segments spans residues 29–49 (WHIL…TWLL), 66–86 (LCWF…FVLY), 121–141 (METI…IAFL), and 185–205 (FWFY…VLVL). The EXPERA domain maps to 61 to 204 (WRRLSLCWFA…LWLVLPGVLV (144 aa)).

The protein belongs to the EBP family.

Its subcellular location is the endoplasmic reticulum membrane. The protein localises to the nucleus envelope. It is found in the cytoplasmic vesicle. The catalysed reaction is lathosterol = 5alpha-cholest-8-en-3beta-ol. It catalyses the reaction zymosterol = 5alpha-cholesta-7,24-dien-3beta-ol. It carries out the reaction 5,6alpha-epoxy-5alpha-cholestan-3beta-ol + H2O = 5alpha-cholestane-3beta,5,6beta-triol. The enzyme catalyses 5,6beta-epoxy-5beta-cholestan-3beta-ol + H2O = 5alpha-cholestane-3beta,5,6beta-triol. The protein operates within steroid biosynthesis; cholesterol biosynthesis. Its activity is regulated as follows. Cholestenol Delta-isomerase and cholesterol-5,6-epoxide hydrolase (ChEH) activities are inhibited by tamoxifen and the selective AEBS ligand (4-benzyl-phenoxy)-ethyl-N-pyrrolidine (PBPE). ChEH activity is inhibited by oleic acid. In terms of biological role, isomerase that catalyzes the conversion of Delta(8)-sterols to their corresponding Delta(7)-isomers a catalytic step in the postlanosterol biosynthesis of cholesterol. Component of the microsomal antiestrogen binding site (AEBS), a multiproteic complex at the ER membrane that consists of an association between EBP and 7-dehydrocholesterol reductase/DHCR7. This complex is responsible for cholesterol-5,6-epoxide hydrolase (ChEH) activity, which consists in the hydration of cholesterol-5,6-epoxides (5,6-EC) into cholestane-3beta,5alpha,6beta-triol (CT). The precise role of each component of this complex has not been described yet. The sequence is that of 3-beta-hydroxysteroid-Delta(8),Delta(7)-isomerase from Homo sapiens (Human).